A 242-amino-acid chain; its full sequence is Biosynthetic peptidoglycan transglycosylase (242 aa).

Residues 19 to 39 form a helical membrane-spanning segment; that stretch reads LMVVLAVFWGGGIALFSVAPV.

The protein belongs to the glycosyltransferase 51 family.

It is found in the cell inner membrane. It catalyses the reaction [GlcNAc-(1-&gt;4)-Mur2Ac(oyl-L-Ala-gamma-D-Glu-L-Lys-D-Ala-D-Ala)](n)-di-trans,octa-cis-undecaprenyl diphosphate + beta-D-GlcNAc-(1-&gt;4)-Mur2Ac(oyl-L-Ala-gamma-D-Glu-L-Lys-D-Ala-D-Ala)-di-trans,octa-cis-undecaprenyl diphosphate = [GlcNAc-(1-&gt;4)-Mur2Ac(oyl-L-Ala-gamma-D-Glu-L-Lys-D-Ala-D-Ala)](n+1)-di-trans,octa-cis-undecaprenyl diphosphate + di-trans,octa-cis-undecaprenyl diphosphate + H(+). It participates in cell wall biogenesis; peptidoglycan biosynthesis. Functionally, peptidoglycan polymerase that catalyzes glycan chain elongation from lipid-linked precursors. This Escherichia coli (strain SMS-3-5 / SECEC) protein is Biosynthetic peptidoglycan transglycosylase.